The sequence spans 391 residues: tRNA (cytosine(38)-C(5))-methyltransferase (391 aa).

In terms of domain architecture, SAM-dependent MTase C5-type spans L4–D391. Residues I13–G15, D34, I57–E58, and S76 contribute to the S-adenosyl-L-methionine site. Residue C79 is part of the active site. S376 serves as a coordination point for S-adenosyl-L-methionine.

This sequence belongs to the class I-like SAM-binding methyltransferase superfamily. C5-methyltransferase family.

The protein localises to the cytoplasm. The enzyme catalyses cytidine(38) in tRNA + S-adenosyl-L-methionine = 5-methylcytidine(38) in tRNA + S-adenosyl-L-homocysteine + H(+). Specifically methylates cytosine 38 in the anticodon loop of tRNA(Asp). Has higher activity on tRNA(Asp) modified with queuosine at position 34. This Bos taurus (Bovine) protein is tRNA (cytosine(38)-C(5))-methyltransferase (TRDMT1).